The primary structure comprises 438 residues: GTPase Der (438 aa).

2 consecutive EngA-type G domains span residues 2–164 and 173–343; these read HKVA…PEDD and IRIS…EKWQ. GTP-binding positions include 8–15, 55–59, 116–119, 179–186, 226–230, and 288–291; these read GRPNVGKS, DTGGL, NKID, DTAGI, and NKWD. A KH-like domain is found at 344 to 428; the sequence is SRIGTSELNR…PVRLKWKEKG (85 aa).

It belongs to the TRAFAC class TrmE-Era-EngA-EngB-Septin-like GTPase superfamily. EngA (Der) GTPase family. In terms of assembly, associates with the 50S ribosomal subunit.

Functionally, GTPase that plays an essential role in the late steps of ribosome biogenesis. The sequence is that of GTPase Der from Deinococcus radiodurans (strain ATCC 13939 / DSM 20539 / JCM 16871 / CCUG 27074 / LMG 4051 / NBRC 15346 / NCIMB 9279 / VKM B-1422 / R1).